A 368-amino-acid polypeptide reads, in one-letter code: tRNA-specific 2-thiouridylase MnmA (368 aa).

ATP contacts are provided by residues 11 to 18 (GMSGGVDS) and methionine 37. Residues 97 to 99 (NPD) are interaction with target base in tRNA. The active-site Nucleophile is the cysteine 102. Residues cysteine 102 and cysteine 199 are joined by a disulfide bond. Glycine 127 lines the ATP pocket. The interval 149 to 151 (KDQ) is interaction with tRNA. Cysteine 199 functions as the Cysteine persulfide intermediate in the catalytic mechanism. Residues 311 to 312 (RY) form an interaction with tRNA region.

The protein belongs to the MnmA/TRMU family. Interacts with TusE.

The protein resides in the cytoplasm. It catalyses the reaction S-sulfanyl-L-cysteinyl-[protein] + uridine(34) in tRNA + AH2 + ATP = 2-thiouridine(34) in tRNA + L-cysteinyl-[protein] + A + AMP + diphosphate + H(+). Functionally, catalyzes the 2-thiolation of uridine at the wobble position (U34) of tRNA(Lys), tRNA(Glu) and tRNA(Gln), leading to the formation of s(2)U34, the first step of tRNA-mnm(5)s(2)U34 synthesis. Sulfur is provided by IscS, via a sulfur-relay system. Binds ATP and its substrate tRNAs. This Escherichia coli O1:K1 / APEC protein is tRNA-specific 2-thiouridylase MnmA.